The following is a 96-amino-acid chain: Co-chaperonin GroES (96 aa).

Belongs to the GroES chaperonin family. As to quaternary structure, heptamer of 7 subunits arranged in a ring. Interacts with the chaperonin GroEL.

It is found in the cytoplasm. Functionally, together with the chaperonin GroEL, plays an essential role in assisting protein folding. The GroEL-GroES system forms a nano-cage that allows encapsulation of the non-native substrate proteins and provides a physical environment optimized to promote and accelerate protein folding. GroES binds to the apical surface of the GroEL ring, thereby capping the opening of the GroEL channel. This is Co-chaperonin GroES from Shewanella loihica (strain ATCC BAA-1088 / PV-4).